A 207-amino-acid chain; its full sequence is MRNGDSKWITSKQARQDVQKFRAKSSVILSSSSTILSDNPLLNVRYKELDKKTLSIFPNKIFQHPIRVIIDSKNRVQPSHNIIKTKGKIWLIRLKSDRKIWPKNTTQIIEKDHNKKINIFSLLKFLGQSEINNVWIEAGSTLSGFLLNSYLIDELIIYMAPKILGHEAKPLCMIYEKLKISNSLQFKFKNICQIGPDIRLILSPKKI.

Residue Ser-6 participates in substrate binding. Residue Trp-8 coordinates NADP(+). Arg-22 provides a ligand contact to substrate. Asp-38 contacts NADP(+). Substrate is bound by residues Leu-42 and Arg-45. Ser-72 contributes to the NADP(+) binding site. Glu-137 contacts substrate.

The protein belongs to the HTP reductase family.

It carries out the reaction 5-amino-6-(5-phospho-D-ribitylamino)uracil + NADP(+) = 5-amino-6-(5-phospho-D-ribosylamino)uracil + NADPH + H(+). It functions in the pathway cofactor biosynthesis; riboflavin biosynthesis; 5-amino-6-(D-ribitylamino)uracil from GTP: step 3/4. The sequence is that of 5-amino-6-(5-phosphoribosylamino)uracil reductase (ribD2) from Buchnera aphidicola subsp. Acyrthosiphon pisum (strain APS) (Acyrthosiphon pisum symbiotic bacterium).